The primary structure comprises 255 residues: 14-3-3-like protein B (255 aa).

Belongs to the 14-3-3 family.

The polypeptide is 14-3-3-like protein B (Nicotiana tabacum (Common tobacco)).